A 207-amino-acid chain; its full sequence is Large ribosomal subunit protein uL4 (207 aa).

The segment at 49 to 75 is disordered; it reads HAVKNRSAVSGGGRKPWKQKGTGRARA.

The protein belongs to the universal ribosomal protein uL4 family. In terms of assembly, part of the 50S ribosomal subunit.

In terms of biological role, one of the primary rRNA binding proteins, this protein initially binds near the 5'-end of the 23S rRNA. It is important during the early stages of 50S assembly. It makes multiple contacts with different domains of the 23S rRNA in the assembled 50S subunit and ribosome. Functionally, forms part of the polypeptide exit tunnel. The chain is Large ribosomal subunit protein uL4 from Leuconostoc mesenteroides subsp. mesenteroides (strain ATCC 8293 / DSM 20343 / BCRC 11652 / CCM 1803 / JCM 6124 / NCDO 523 / NBRC 100496 / NCIMB 8023 / NCTC 12954 / NRRL B-1118 / 37Y).